A 2506-amino-acid polypeptide reads, in one-letter code: Highly reducing polyketide synthase rstn3 (2506 aa).

Residues 8–436 (VEPIAIVGMA…GANAHAILDA (429 aa)) form the Ketosynthase family 3 (KS3) domain. Active-site for beta-ketoacyl synthase activity residues include cysteine 183, histidine 318, and histidine 358. The Malonyl-CoA:ACP transacylase (MAT) domain occupies 547–875 (FIFTGQGAQW…KMVGSLFLSG (329 aa)). The segment at 941–1050 (HDLLGSRLPG…ASDQSISSVE (110 aa)) is N-terminal hotdog fold. In terms of domain architecture, PKS/mFAS DH spans 941–1212 (HDLLGSRLPG…FSSLETAVGE (272 aa)). Residue histidine 973 is the Proton acceptor; for dehydratase activity of the active site. Residues 1060–1212 (NKDSYDRRWY…FSSLETAVGE (153 aa)) form a C-terminal hotdog fold region. Catalysis depends on aspartate 1125, which acts as the Proton donor; for dehydratase activity. The tract at residues 1263–1563 (VTRLAIRSSA…SGADIVLDDY (301 aa)) is methyltransferase (CMet) domain. An Enoyl reductase (ER) domain is found at 1827–2093 (GRVDSFYFKE…QDDYVGRVVL (267 aa)). The 181-residue stretch at 2116–2296 (ASYLLIGCLG…QATSIALGMI (181 aa)) folds into the Ketoreductase (KR) domain. Residues 2423 to 2501 (AVKVTTLGLI…DLAEKVVALA (79 aa)) form the Carrier domain. At serine 2460 the chain carries O-(pantetheine 4'-phosphoryl)serine.

The cofactor is pantetheine 4'-phosphate.

The protein operates within antifungal biosynthesis. Its function is as follows. Highly reducing polyketide synthase; part of the gene cluster that mediates the biosynthesis of the tetrahydropyranyl antifungal agent restricticin that acts as an inhibitor of CYP51 and blocks the ergosterol biosynthesis. The highly reducing polyketide synthase rstn3, the short chain dehydrogenase rstn4, the cyclase rstn5, the FAD-dependent monooxygenase rstn6 and the enoylreductase rstn7 are required to generate the first stable intermediate desmethylrestrictinol. Rstn3 with rstn7 biosynthesize the first polyketide chain intermediate that is reduced by rstn4, followed by epoxidation by rstn6 before 6-endo cyclization via epoxide opening by rstn5 leads to desmethylrestrictinol. The methyltransferase rstn1 then catalyzes the C4 O-methylation of desmethylrestrictinol to produce restrictinol, and the nonribosomal peptide synthetase rstn8 catalyzes the C3 esterification of restrictinol with glycine that leads to restricticin. This is Highly reducing polyketide synthase rstn3 from Aspergillus nomiae NRRL (strain ATCC 15546 / NRRL 13137 / CBS 260.88 / M93).